A 532-amino-acid polypeptide reads, in one-letter code: MNFGRVNPAQTLDAQGITGLGEVHYNLIEPALVEAAVKRGEGRLGRGGAFLCSTGAFTGRSPKDKFVVRTPSVEDTIWWENNAPMDPEAFDRLHADMLEHMKGRTYFVQDLFAGADPELRLDVRMVTELAWHGLFIRHMLRRPERTELDSFVPEWTVINCPSFKADPARHGCRTDTVITLNFDKKLILIANTEYAGENKKSVFTLLNYILPGKGVMAMHCSANHAIGNTDDAAVFFGLSGTGKTTLSADPSRTLIGDDEHGWSDKGTFNFEGGCYAKTINLSPEAEPEIYATTSKFATVVENMVYNEETLELDFDDDSLTANTRCAYPLEYISNASATGMGGHPKNVIMLTCDAFGVLPPIARLTPAQAMYHFLSGFTSKVAGTERGVTEPQPTFSTCFGAPFMPRRPEVYGKLLQEKITSLGATCWLVNTGWTGGAYGTGKRMPIKATRALLTAALDGSLANVTFRKDPNFGFEVPTELHGVDSSLLDPRSTWADPAAYDAQAKKLVEMFANNFAQYVPYIDADVKAAAIG.

The substrate site is built by Arg-60, Tyr-194, and Lys-200. ATP-binding positions include Lys-200, His-219, and 237-245 (GLSGTGKTT). Positions 200 and 219 each coordinate Mn(2+). Residue Asp-258 coordinates Mn(2+). ATP is bound by residues Glu-286, Arg-324, and Thr-449. Arg-324 is a substrate binding site.

It belongs to the phosphoenolpyruvate carboxykinase (ATP) family. The cofactor is Mn(2+).

Its subcellular location is the cytoplasm. It carries out the reaction oxaloacetate + ATP = phosphoenolpyruvate + ADP + CO2. The protein operates within carbohydrate biosynthesis; gluconeogenesis. Functionally, involved in the gluconeogenesis. Catalyzes the conversion of oxaloacetate (OAA) to phosphoenolpyruvate (PEP) through direct phosphoryl transfer between the nucleoside triphosphate and OAA. This Cereibacter sphaeroides (strain ATCC 17025 / ATH 2.4.3) (Rhodobacter sphaeroides) protein is Phosphoenolpyruvate carboxykinase (ATP).